Here is a 286-residue protein sequence, read N- to C-terminus: Bifunctional protein FolD (286 aa).

NADP(+)-binding positions include 165–167 and Ser190; that span reads GRS.

It belongs to the tetrahydrofolate dehydrogenase/cyclohydrolase family. As to quaternary structure, homodimer.

It carries out the reaction (6R)-5,10-methylene-5,6,7,8-tetrahydrofolate + NADP(+) = (6R)-5,10-methenyltetrahydrofolate + NADPH. The enzyme catalyses (6R)-5,10-methenyltetrahydrofolate + H2O = (6R)-10-formyltetrahydrofolate + H(+). It participates in one-carbon metabolism; tetrahydrofolate interconversion. Catalyzes the oxidation of 5,10-methylenetetrahydrofolate to 5,10-methenyltetrahydrofolate and then the hydrolysis of 5,10-methenyltetrahydrofolate to 10-formyltetrahydrofolate. The polypeptide is Bifunctional protein FolD (Staphylococcus epidermidis (strain ATCC 35984 / DSM 28319 / BCRC 17069 / CCUG 31568 / BM 3577 / RP62A)).